A 561-amino-acid chain; its full sequence is Dihydroxy-acid dehydratase (561 aa).

Cysteine 51 lines the [2Fe-2S] cluster pocket. Position 83 (aspartate 83) interacts with Mg(2+). A [2Fe-2S] cluster-binding site is contributed by cysteine 124. Mg(2+) is bound by residues aspartate 125 and lysine 126. An N6-carboxylysine modification is found at lysine 126. A [2Fe-2S] cluster-binding site is contributed by cysteine 196. Glutamate 448 is a binding site for Mg(2+). Catalysis depends on serine 473, which acts as the Proton acceptor.

It belongs to the IlvD/Edd family. In terms of assembly, homodimer. Requires [2Fe-2S] cluster as cofactor. It depends on Mg(2+) as a cofactor.

It catalyses the reaction (2R)-2,3-dihydroxy-3-methylbutanoate = 3-methyl-2-oxobutanoate + H2O. The enzyme catalyses (2R,3R)-2,3-dihydroxy-3-methylpentanoate = (S)-3-methyl-2-oxopentanoate + H2O. It participates in amino-acid biosynthesis; L-isoleucine biosynthesis; L-isoleucine from 2-oxobutanoate: step 3/4. The protein operates within amino-acid biosynthesis; L-valine biosynthesis; L-valine from pyruvate: step 3/4. Functionally, functions in the biosynthesis of branched-chain amino acids. Catalyzes the dehydration of (2R,3R)-2,3-dihydroxy-3-methylpentanoate (2,3-dihydroxy-3-methylvalerate) into 2-oxo-3-methylpentanoate (2-oxo-3-methylvalerate) and of (2R)-2,3-dihydroxy-3-methylbutanoate (2,3-dihydroxyisovalerate) into 2-oxo-3-methylbutanoate (2-oxoisovalerate), the penultimate precursor to L-isoleucine and L-valine, respectively. This is Dihydroxy-acid dehydratase from Sulfolobus acidocaldarius (strain ATCC 33909 / DSM 639 / JCM 8929 / NBRC 15157 / NCIMB 11770).